The chain runs to 73 residues: Translation initiation factor IF-1 (73 aa).

The 72-residue stretch at 1 to 72 (MAKEDVIEVE…SRGRITYRYR (72 aa)) folds into the S1-like domain.

Belongs to the IF-1 family. Component of the 30S ribosomal translation pre-initiation complex which assembles on the 30S ribosome in the order IF-2 and IF-3, IF-1 and N-formylmethionyl-tRNA(fMet); mRNA recruitment can occur at any time during PIC assembly.

It localises to the cytoplasm. Its function is as follows. One of the essential components for the initiation of protein synthesis. Stabilizes the binding of IF-2 and IF-3 on the 30S subunit to which N-formylmethionyl-tRNA(fMet) subsequently binds. Helps modulate mRNA selection, yielding the 30S pre-initiation complex (PIC). Upon addition of the 50S ribosomal subunit IF-1, IF-2 and IF-3 are released leaving the mature 70S translation initiation complex. The sequence is that of Translation initiation factor IF-1 from Rubrobacter xylanophilus (strain DSM 9941 / JCM 11954 / NBRC 16129 / PRD-1).